Reading from the N-terminus, the 126-residue chain is Large ribosomal subunit protein bL12 (126 aa).

Belongs to the bacterial ribosomal protein bL12 family. In terms of assembly, homodimer. Part of the ribosomal stalk of the 50S ribosomal subunit. Forms a multimeric L10(L12)X complex, where L10 forms an elongated spine to which 2 to 4 L12 dimers bind in a sequential fashion. Binds GTP-bound translation factors.

Functionally, forms part of the ribosomal stalk which helps the ribosome interact with GTP-bound translation factors. Is thus essential for accurate translation. The polypeptide is Large ribosomal subunit protein bL12 (Nitrosococcus oceani (strain ATCC 19707 / BCRC 17464 / JCM 30415 / NCIMB 11848 / C-107)).